Reading from the N-terminus, the 360-residue chain is S-adenosylmethionine:tRNA ribosyltransferase-isomerase (360 aa).

The protein belongs to the QueA family. Monomer.

The protein resides in the cytoplasm. The enzyme catalyses 7-aminomethyl-7-carbaguanosine(34) in tRNA + S-adenosyl-L-methionine = epoxyqueuosine(34) in tRNA + adenine + L-methionine + 2 H(+). The protein operates within tRNA modification; tRNA-queuosine biosynthesis. Its function is as follows. Transfers and isomerizes the ribose moiety from AdoMet to the 7-aminomethyl group of 7-deazaguanine (preQ1-tRNA) to give epoxyqueuosine (oQ-tRNA). This chain is S-adenosylmethionine:tRNA ribosyltransferase-isomerase, found in Rhizobium meliloti (strain 1021) (Ensifer meliloti).